We begin with the raw amino-acid sequence, 394 residues long: Ceramide synthase 4 (394 aa).

The Lumenal segment spans residues 1–31 (MLSSFNEWFWQDRFWLPPNVTWTELEDRDGR). A glycan (N-linked (GlcNAc...) asparagine) is linked at Asn-19. A helical transmembrane segment spans residues 32 to 52 (VYPHPQDLLAALPLALVLLAM). The tract at residues 67-128 (WLGVRDQTRR…RRRRNQDRPQ (62 aa)) is homeobox-like. One can recognise a TLC domain in the interval 131 to 332 (KKFCEASWRF…ILRMLYSFMK (202 aa)). A run of 4 helical transmembrane segments spans residues 140–160 (FLFY…ESWL), 179–199 (LYWW…RLPF), 209–229 (QVIH…ANLL), and 260–280 (VCDA…LVLF). The Last loop motif signature appears at 291 to 301 (ESISNRGPFFG). A helical membrane pass occupies residues 304 to 324 (FFNGLLMLLQLLHVFWSCLIL). Residues 325-394 (RMLYSFMKKG…RLTNRHTTAT (70 aa)) lie on the Cytoplasmic side of the membrane. The interval 341–394 (RSDVEESDSSEEAAAAQEPLQLKNGAAGGPRPAPTDGPRSRVAGRLTNRHTTAT) is disordered. Phosphoserine occurs at positions 342, 349, and 350.

In terms of processing, phosphorylated at the C-terminus by CK2. N-glycosylated.

It is found in the endoplasmic reticulum membrane. It carries out the reaction sphinganine + octadecanoyl-CoA = N-(octadecanoyl)-sphinganine + CoA + H(+). It catalyses the reaction eicosanoyl-CoA + sphinganine = N-eicosanoylsphinganine + CoA + H(+). The catalysed reaction is docosanoyl-CoA + sphinganine = N-docosanoylsphinganine + CoA + H(+). The enzyme catalyses tetracosanoyl-CoA + sphinganine = N-tetracosanoylsphinganine + CoA + H(+). It carries out the reaction hexacosanoyl-CoA + sphinganine = N-hexacosanoylsphinganine + CoA + H(+). It catalyses the reaction a fatty acyl-CoA + sphing-4-enine = an N-acylsphing-4-enine + CoA + H(+). The catalysed reaction is sphing-4-enine + octadecanoyl-CoA = N-octadecanoylsphing-4-enine + CoA + H(+). The enzyme catalyses hexadecasphinganine + octadecanoyl-CoA = N-octadecanoylhexadecasphinganine + CoA + H(+). Its pathway is lipid metabolism; sphingolipid metabolism. Ceramide synthase that catalyzes formation of ceramide from sphinganine and acyl-CoA substrates, with high selectivity toward long and very-long chains (C18:0-C22:0) as acyl donor. The polypeptide is Ceramide synthase 4 (Homo sapiens (Human)).